The following is a 244-amino-acid chain: ATP synthase subunit a, chloroplastic (244 aa).

Transmembrane regions (helical) follow at residues 35–55 (QVLITSWVVIAILLGSAAIAV), 92–112 (VPFIGTLFLFIFVSNWSGALL), 131–151 (INTTVALALLTSVAYFYAGIT), 196–216 (LVVVVLVSLVPLVVPIPVMFL), and 217–237 (GLFTSGIQALIFATLAAAYIG).

Belongs to the ATPase A chain family. As to quaternary structure, F-type ATPases have 2 components, CF(1) - the catalytic core - and CF(0) - the membrane proton channel. CF(1) has five subunits: alpha(3), beta(3), gamma(1), delta(1), epsilon(1). CF(0) has four main subunits: a, b, b' and c.

The protein localises to the plastid. The protein resides in the chloroplast thylakoid membrane. Functionally, key component of the proton channel; it plays a direct role in the translocation of protons across the membrane. The protein is ATP synthase subunit a, chloroplastic of Coffea arabica (Arabian coffee).